Here is a 103-residue protein sequence, read N- to C-terminus: UPF0145 protein NT01CX_0170 (103 aa).

The protein belongs to the UPF0145 family.

The protein is UPF0145 protein NT01CX_0170 of Clostridium novyi (strain NT).